The chain runs to 298 residues: Deoxyuridine 5'-triphosphate nucleotidohydrolase (298 aa).

A substrate-binding site is contributed by 180–182 (RSG).

This sequence belongs to the dUTPase family. Mg(2+) is required as a cofactor.

The enzyme catalyses dUTP + H2O = dUMP + diphosphate + H(+). Involved in nucleotide metabolism: produces dUMP, the immediate precursor of thymidine nucleotides and decreases the intracellular concentration of dUTP to avoid uracil incorporation into viral DNA. This chain is Deoxyuridine 5'-triphosphate nucleotidohydrolase, found in Alcelaphine herpesvirus 1 (strain C500) (AlHV-1).